The primary structure comprises 437 residues: Bystin (437 aa).

The segment at 1-105 (MPKFKAARGV…DGSDDEDEEW (105 aa)) is disordered. Arg40 is modified (omega-N-methylarginine). Position 55 is a phosphoserine (Ser55). Residues 71-87 (AEHGTGDKPAAPRERTT) show a composition bias toward basic and acidic residues. The residue at position 98 (Ser98) is a Phosphoserine. Thr156 is modified (phosphothreonine). A phosphoserine mark is found at Ser167 and Ser414.

Belongs to the bystin family. In terms of assembly, binds trophinin, tastin and cytokeratins. Found in the placenta from the sixth week of pregnancy. Was localized in the cytoplasm of the syncytiotrophoblast in the chorionic villi and in endometrial decidual cells at the uteroplacental interface. After week 10, the level decreased and then disappeared from placental villi.

Its subcellular location is the cytoplasm. The protein localises to the nucleus. It is found in the nucleolus. Functionally, required for processing of 20S pre-rRNA precursor and biogenesis of 40S ribosomal subunits. May be required for trophinin-dependent regulation of cell adhesion during implantation of human embryos. The sequence is that of Bystin from Homo sapiens (Human).